The sequence spans 379 residues: Cytochrome b (379 aa).

4 consecutive transmembrane segments (helical) span residues 34 to 54 (FGSL…LLAM), 78 to 99 (WLIR…YLHI), 114 to 134 (WNTG…GYVL), and 179 to 199 (FFAL…IHLT). 2 residues coordinate heme b: His84 and His98. Residues His183 and His197 each contribute to the heme b site. His202 serves as a coordination point for a ubiquinone. Transmembrane regions (helical) follow at residues 227–247 (LKDA…AFFS), 289–309 (LGGV…PFLH), 321–341 (LSQI…WIGS), and 348–368 (FIII…VLFP).

The protein belongs to the cytochrome b family. The cytochrome bc1 complex contains 11 subunits: 3 respiratory subunits (MT-CYB, CYC1 and UQCRFS1), 2 core proteins (UQCRC1 and UQCRC2) and 6 low-molecular weight proteins (UQCRH/QCR6, UQCRB/QCR7, UQCRQ/QCR8, UQCR10/QCR9, UQCR11/QCR10 and a cleavage product of UQCRFS1). This cytochrome bc1 complex then forms a dimer. The cofactor is heme b.

Its subcellular location is the mitochondrion inner membrane. Functionally, component of the ubiquinol-cytochrome c reductase complex (complex III or cytochrome b-c1 complex) that is part of the mitochondrial respiratory chain. The b-c1 complex mediates electron transfer from ubiquinol to cytochrome c. Contributes to the generation of a proton gradient across the mitochondrial membrane that is then used for ATP synthesis. The chain is Cytochrome b (MT-CYB) from Rhea americana (Greater rhea).